The following is a 468-amino-acid chain: Peroxisome proliferator-activated receptor alpha (468 aa).

Residues 99-173 constitute a DNA-binding region (nuclear receptor); the sequence is NIECRICGDK…VGMSHNAIRF (75 aa). NR C4-type zinc fingers lie at residues 102–122 and 139–161; these read CRICGDKASGYHYGVHACEGC and CDRSCKIQKKNRNKCQYCRFHKC. Residues 239–466 form the NR LBD domain; that stretch reads FVIHDMETLC…HPLLQEIYRD (228 aa). Positions 304–433 are required for heterodimerization with RXRA; the sequence is DQVTLLKYGV…PKLLQKMVDL (130 aa).

The protein belongs to the nuclear hormone receptor family. NR1 subfamily. As to quaternary structure, heterodimer; with RXRA. This heterodimerization is required for DNA binding and transactivation activity. Interacts with NCOA3 coactivator. Interacts with CITED2; the interaction stimulates its transcriptional activity. Also interacts with PPARBP in vitro. Interacts with AKAP13, LPIN1, PRDM16 and coactivator NCOA6. Interacts with ASXL1 and ASXL2. Interacts with PER2. Interacts with SIRT1; the interaction seems to be modulated by NAD(+) levels. Interacts with CRY1 and CRY2. In hepatocytes, interacts with PAQR3 and HUWE1; the interactions promote PPARA poylubiquitination and HUWE1-mediated degradation. Post-translationally, phosphorylated. Ubiquitinated by E3 ubiquitin-protein ligase HUWE1; leading to proteasomal degradation. As to expression, expressed predominantly in liver and kidney.

It localises to the nucleus. In terms of biological role, ligand-activated transcription factor. Key regulator of lipid metabolism. Activated by the endogenous ligand 1-palmitoyl-2-oleoyl-sn-glycerol-3-phosphocholine (16:0/18:1-GPC). Activated by oleylethanolamide, a naturally occurring lipid that regulates satiety. Receptor for peroxisome proliferators such as hypolipidemic drugs and fatty acids. Regulates the peroxisomal beta-oxidation pathway of fatty acids. Functions as a transcription activator for the ACOX1 and P450 genes. Transactivation activity requires heterodimerization with RXRA and is antagonized by NR2C2. May be required for the propagation of clock information to metabolic pathways regulated by PER2. The sequence is that of Peroxisome proliferator-activated receptor alpha (Ppara) from Rattus norvegicus (Rat).